The following is a 357-amino-acid chain: DNA integrity scanning protein DisA (357 aa).

The 139-residue stretch at 8–146 folds into the DAC domain; sequence VKSMINILQL…GNLRYTLKDI (139 aa). ATP is bound by residues G75, L93, and 106–110; that span reads MRHRT.

It belongs to the DisA family. As to quaternary structure, homooctamer. The cofactor is Mg(2+).

The catalysed reaction is 2 ATP = 3',3'-c-di-AMP + 2 diphosphate. In terms of biological role, participates in a DNA-damage check-point that is active prior to asymmetric division when DNA is damaged. DisA forms globular foci that rapidly scan along the chromosomes during sporulation, searching for lesions. When a lesion is present, DisA pauses at the lesion site. This triggers a cellular response that culminates in a temporary block in sporulation initiation. Its function is as follows. Also has diadenylate cyclase activity, catalyzing the condensation of 2 ATP molecules into cyclic di-AMP (c-di-AMP). c-di-AMP acts as a signaling molecule that couples DNA integrity with progression of sporulation. The rise in c-di-AMP level generated by DisA while scanning the chromosome, operates as a positive signal that advances sporulation; upon encountering a lesion, the DisA focus arrests at the damaged site and halts c-di-AMP synthesis. The protein is DNA integrity scanning protein DisA of Bacillus cereus (strain G9842).